Consider the following 355-residue polypeptide: F-box only protein 32 (355 aa).

The Nuclear localization signal signature appears at 62-67 (KKRKKD). Residues 169–173 (LLQTL) carry the Nuclear export signal motif. Positions 223–271 (LTITDLPVCLQLNIMQRLSDGRDLVSLGQAAPDLHVLSEDRLLWKRLCQ) constitute an F-box domain. A Bipartite nuclear localization signal motif is present at residues 280–295 (RKRLILSDKGQLDWKK).

As to quaternary structure, part of the SCF (SKP1-CUL1-F-box) E3 ubiquitin-protein ligase complex SCF(FBXO32) formed of CUL1, SKP1, RBX1 and FBXO32. As to expression, specifically expressed in cardiac and skeletal muscle.

It localises to the cytoplasm. It is found in the nucleus. Its pathway is protein modification; protein ubiquitination. Substrate recognition component of a SCF (SKP1-CUL1-F-box protein) E3 ubiquitin-protein ligase complex which mediates the ubiquitination and subsequent proteasomal degradation of target proteins. Probably recognizes and binds to phosphorylated target proteins during skeletal muscle atrophy. Recognizes TERF1. This Mus musculus (Mouse) protein is F-box only protein 32 (Fbxo32).